A 157-amino-acid chain; its full sequence is Ribosome-binding factor A (157 aa).

The segment at Gln-127 to Asp-157 is disordered. Residues Ala-135–Asp-157 show a composition bias toward acidic residues.

Belongs to the RbfA family. Monomer. Binds 30S ribosomal subunits, but not 50S ribosomal subunits or 70S ribosomes.

Its subcellular location is the cytoplasm. Its function is as follows. One of several proteins that assist in the late maturation steps of the functional core of the 30S ribosomal subunit. Associates with free 30S ribosomal subunits (but not with 30S subunits that are part of 70S ribosomes or polysomes). Required for efficient processing of 16S rRNA. May interact with the 5'-terminal helix region of 16S rRNA. The protein is Ribosome-binding factor A of Shewanella baltica (strain OS155 / ATCC BAA-1091).